Consider the following 907-residue polypeptide: Translation initiation factor IF-2 (907 aa).

Residues 26 to 317 (DAGMKKSSSD…KPKSMQHGFD (292 aa)) are disordered. Basic and acidic residues-rich tracts occupy residues 28-44 (GMKK…EKQK) and 101-248 (SAIE…DTDY). Basic residues predominate over residues 299 to 308 (KGGRKGKLSK). A tr-type G domain is found at 406 to 575 (PRAPVVTIMG…LLQAEVLELT (170 aa)). The interval 415 to 422 (GHVDHGKT) is G1. 415 to 422 (GHVDHGKT) serves as a coordination point for GTP. The segment at 440-444 (GITQH) is G2. Residues 461–464 (DTPG) are G3. Residues 461-465 (DTPGH) and 515-518 (NKID) each bind GTP. The tract at residues 515-518 (NKID) is G4. Residues 551 to 553 (SAK) form a G5 region.

This sequence belongs to the TRAFAC class translation factor GTPase superfamily. Classic translation factor GTPase family. IF-2 subfamily.

It localises to the cytoplasm. One of the essential components for the initiation of protein synthesis. Protects formylmethionyl-tRNA from spontaneous hydrolysis and promotes its binding to the 30S ribosomal subunits. Also involved in the hydrolysis of GTP during the formation of the 70S ribosomal complex. In Vibrio vulnificus (strain YJ016), this protein is Translation initiation factor IF-2.